The sequence spans 289 residues: Bifunctional protein FolD (289 aa).

Residues 166-168 (GVS) and isoleucine 232 contribute to the NADP(+) site.

The protein belongs to the tetrahydrofolate dehydrogenase/cyclohydrolase family. As to quaternary structure, homodimer.

The catalysed reaction is (6R)-5,10-methylene-5,6,7,8-tetrahydrofolate + NADP(+) = (6R)-5,10-methenyltetrahydrofolate + NADPH. The enzyme catalyses (6R)-5,10-methenyltetrahydrofolate + H2O = (6R)-10-formyltetrahydrofolate + H(+). It functions in the pathway one-carbon metabolism; tetrahydrofolate interconversion. In terms of biological role, catalyzes the oxidation of 5,10-methylenetetrahydrofolate to 5,10-methenyltetrahydrofolate and then the hydrolysis of 5,10-methenyltetrahydrofolate to 10-formyltetrahydrofolate. This chain is Bifunctional protein FolD, found in Methylobacillus flagellatus (strain ATCC 51484 / DSM 6875 / VKM B-1610 / KT).